A 204-amino-acid polypeptide reads, in one-letter code: Cytochrome c biogenesis ATP-binding export protein CcmA (204 aa).

Residues 2–203 form the ABC transporter domain; it reads LEADNLECVR…PAGTVRELRL (202 aa). 34–41 contacts ATP; sequence GRNGAGKT.

This sequence belongs to the ABC transporter superfamily. CcmA exporter (TC 3.A.1.107) family. The complex is composed of two ATP-binding proteins (CcmA) and two transmembrane proteins (CcmB).

It is found in the cell inner membrane. It catalyses the reaction heme b(in) + ATP + H2O = heme b(out) + ADP + phosphate + H(+). Its function is as follows. Part of the ABC transporter complex CcmAB involved in the biogenesis of c-type cytochromes; once thought to export heme, this seems not to be the case, but its exact role is uncertain. Responsible for energy coupling to the transport system. The protein is Cytochrome c biogenesis ATP-binding export protein CcmA of Dechloromonas aromatica (strain RCB).